The primary structure comprises 416 residues: uncharacterized protein (416 aa).

Residues 341 to 360 (EDREKGSQHTNNTHHHKRNL) form a disordered region.

This is an uncharacterized protein from Human cytomegalovirus (strain AD169) (HHV-5).